We begin with the raw amino-acid sequence, 197 residues long: Adenylate kinase (197 aa).

ATP is bound at residue 7–15; that stretch reads ALPGSGKTT.

This sequence belongs to the archaeal adenylate kinase family.

It localises to the cytoplasm. It catalyses the reaction AMP + ATP = 2 ADP. The protein is Adenylate kinase (adkA) of Pyrobaculum aerophilum (strain ATCC 51768 / DSM 7523 / JCM 9630 / CIP 104966 / NBRC 100827 / IM2).